Consider the following 240-residue polypeptide: 2,3,4,5-tetrahydropyridine-2,6-dicarboxylate N-acetyltransferase (240 aa).

Belongs to the transferase hexapeptide repeat family. DapH subfamily.

The enzyme catalyses (S)-2,3,4,5-tetrahydrodipicolinate + acetyl-CoA + H2O = L-2-acetamido-6-oxoheptanedioate + CoA. It participates in amino-acid biosynthesis; L-lysine biosynthesis via DAP pathway; LL-2,6-diaminopimelate from (S)-tetrahydrodipicolinate (acetylase route): step 1/3. Functionally, catalyzes the transfer of an acetyl group from acetyl-CoA to tetrahydrodipicolinate. This Shouchella clausii (strain KSM-K16) (Alkalihalobacillus clausii) protein is 2,3,4,5-tetrahydropyridine-2,6-dicarboxylate N-acetyltransferase.